Reading from the N-terminus, the 533-residue chain is UDP-glucuronosyltransferase 1-2 (533 aa).

The first 27 residues, 1–27 (MDTGLCAPLRGLSGLLLLLCALPWAEG), serve as a signal peptide directing secretion. Asn-133, Asn-141, Asn-295, and Asn-433 each carry an N-linked (GlcNAc...) asparagine glycan. The helical transmembrane segment at 491 to 507 (VIGFLLAIVLTVVFIVY) threads the bilayer.

The protein belongs to the UDP-glycosyltransferase family.

It is found in the microsome. Its subcellular location is the endoplasmic reticulum membrane. It carries out the reaction glucuronate acceptor + UDP-alpha-D-glucuronate = acceptor beta-D-glucuronoside + UDP + H(+). In terms of biological role, UDPGT is of major importance in the conjugation and subsequent elimination of potentially toxic xenobiotics and endogenous compounds. This is UDP-glucuronosyltransferase 1-2 (Ugt1a2) from Rattus norvegicus (Rat).